A 101-amino-acid chain; its full sequence is Gamma-secretase subunit PEN-2 (101 aa).

The Cytoplasmic segment spans residues Met-1–Arg-17. An intramembrane region (helical) is located at residues Tyr-18 to Trp-36. Residues Phe-37 to Val-57 are Cytoplasmic-facing. The chain crosses the membrane as a helical span at residues Lys-58–Phe-78. Topologically, residues Gln-79 to Ala-101 are lumenal.

The protein belongs to the PEN-2 family. As to quaternary structure, the functional gamma-secretase complex is composed of at least four polypeptides: a presenilin homodimer (psen1 or psen2), nicastrin (ncstn), aph1 (aph1a or aph1b) and psenen.

Its subcellular location is the endoplasmic reticulum membrane. It is found in the golgi apparatus. The protein resides in the golgi stack membrane. It localises to the cell membrane. The protein localises to the membrane. Essential subunit of the gamma-secretase complex, an endoprotease complex that catalyzes the intramembrane cleavage of integral membrane proteins such as Notch receptors and APP (amyloid-beta precursor protein). The gamma-secretase complex plays a role in Notch and Wnt signaling cascades and regulation of downstream processes via its role in processing key regulatory proteins. This Danio rerio (Zebrafish) protein is Gamma-secretase subunit PEN-2 (psenen).